Reading from the N-terminus, the 575-residue chain is Acetolactate synthase large subunit (575 aa).

Glutamate 57 is a thiamine diphosphate binding site. FAD is bound by residues arginine 159, 265–286, and 308–327; these read HGSYAANMALVEADYIINLGSR and DIDAAELGKIVKTDIPILSD. The segment at 395 to 475 is thiamine pyrophosphate binding; the sequence is QHQMWVAQYY…IKVVLINNHS (81 aa). Mg(2+)-binding residues include aspartate 446 and asparagine 473.

It belongs to the TPP enzyme family. As to quaternary structure, dimer of large and small chains. Mg(2+) is required as a cofactor. Thiamine diphosphate serves as cofactor.

It carries out the reaction 2 pyruvate + H(+) = (2S)-2-acetolactate + CO2. Its pathway is amino-acid biosynthesis; L-isoleucine biosynthesis; L-isoleucine from 2-oxobutanoate: step 1/4. The protein operates within amino-acid biosynthesis; L-valine biosynthesis; L-valine from pyruvate: step 1/4. This is Acetolactate synthase large subunit (ilvB) from Lactococcus lactis subsp. lactis (strain IL1403) (Streptococcus lactis).